The sequence spans 184 residues: GTP cyclohydrolase 1 (184 aa).

Residues Cys-75, His-78, and Cys-146 each coordinate Zn(2+).

Belongs to the GTP cyclohydrolase I family. In terms of assembly, homomer.

It carries out the reaction GTP + H2O = 7,8-dihydroneopterin 3'-triphosphate + formate + H(+). It functions in the pathway cofactor biosynthesis; 7,8-dihydroneopterin triphosphate biosynthesis; 7,8-dihydroneopterin triphosphate from GTP: step 1/1. The polypeptide is GTP cyclohydrolase 1 (Streptococcus pneumoniae (strain Hungary19A-6)).